Reading from the N-terminus, the 421-residue chain is Phosphatidylinositol 5-phosphate 4-kinase type-2 gamma (421 aa).

At A2 the chain carries N-acetylalanine. S26 bears the Phosphoserine mark. Residues 43-420 (AADPLVGVFL…RFLDFIANIF (378 aa)) enclose the PIPK domain. The interval 69–75 (VMLLPDD) is required for interaction with PIP5K1A. Residue S349 is modified to Phosphoserine.

Interacts with PIP5K1A; the interaction inhibits PIP5K1A kinase activity. Phosphorylated, phosphorylation is induced by EGF.

The protein localises to the endoplasmic reticulum. It localises to the cytoplasm. It carries out the reaction a 1,2-diacyl-sn-glycero-3-phospho-(1D-myo-inositol-5-phosphate) + ATP = a 1,2-diacyl-sn-glycero-3-phospho-(1D-myo-inositol-4,5-bisphosphate) + ADP + H(+). The enzyme catalyses 1,2-dihexadecanoyl-sn-glycero-3-phospho-(1D-myo-inositol-5-phosphate) + ATP = 1,2-dihexadecanoyl-sn-glycero-3-phospho-(1D-myo-inositol-4,5-bisphosphate) + ADP + H(+). The catalysed reaction is 1,2-dihexadecanoyl-sn-glycero-3-phospho-(1D-myo-inositol-5-phosphate) + GTP = 1,2-dihexadecanoyl-sn-glycero-3-phospho-(1D-myo-inositol-4,5-bisphosphate) + GDP + H(+). Functionally, phosphatidylinositol 5-phosphate 4-kinase with low enzymatic activity. May be a GTP sensor, has higher GTP-dependent kinase activity than ATP-dependent kinase activity. PIP4Ks negatively regulate insulin signaling through a catalytic-independent mechanism. They interact with PIP5Ks and suppress PIP5K-mediated PtdIns(4,5)P2 synthesis and insulin-dependent conversion to PtdIns(3,4,5)P3. The chain is Phosphatidylinositol 5-phosphate 4-kinase type-2 gamma from Mus musculus (Mouse).